The sequence spans 466 residues: Trigger factor (466 aa).

Residues 162–243 enclose the PPIase FKBP-type domain; that stretch reads GDVVSIDLSA…VRSVKERELP (82 aa). Residues 428 to 466 form a disordered region; the sequence is GNTIDTSEFFGKRVSAGEAEEAEPADEGAARAASDEATT. Residues 457–466 show a composition bias toward low complexity; it reads ARAASDEATT.

This sequence belongs to the FKBP-type PPIase family. Tig subfamily.

The protein resides in the cytoplasm. The enzyme catalyses [protein]-peptidylproline (omega=180) = [protein]-peptidylproline (omega=0). Functionally, involved in protein export. Acts as a chaperone by maintaining the newly synthesized protein in an open conformation. Functions as a peptidyl-prolyl cis-trans isomerase. The polypeptide is Trigger factor (Mycobacterium tuberculosis (strain ATCC 25177 / H37Ra)).